The primary structure comprises 141 residues: Large ribosomal subunit protein uL11 (141 aa).

The protein belongs to the universal ribosomal protein uL11 family. As to quaternary structure, part of the ribosomal stalk of the 50S ribosomal subunit. Interacts with L10 and the large rRNA to form the base of the stalk. L10 forms an elongated spine to which L12 dimers bind in a sequential fashion forming a multimeric L10(L12)X complex. In terms of processing, one or more lysine residues are methylated.

Functionally, forms part of the ribosomal stalk which helps the ribosome interact with GTP-bound translation factors. This chain is Large ribosomal subunit protein uL11, found in Herpetosiphon aurantiacus (strain ATCC 23779 / DSM 785 / 114-95).